We begin with the raw amino-acid sequence, 402 residues long: Flagellar hook protein FlgE (402 aa).

The protein belongs to the flagella basal body rod proteins family.

It localises to the bacterial flagellum basal body. This chain is Flagellar hook protein FlgE (flgE), found in Escherichia coli (strain K12).